The chain runs to 175 residues: B9 domain-containing protein 2 (175 aa).

In terms of domain architecture, C2 B9-type spans alanine 2–serine 118.

This sequence belongs to the B9D family. Part of the tectonic-like complex (also named B9 complex). Interacts with TUBG1.

Its subcellular location is the cytoplasm. The protein resides in the cytoskeleton. The protein localises to the cilium basal body. It is found in the cilium axoneme. It localises to the nucleus. Functionally, component of the tectonic-like complex, a complex localized at the transition zone of primary cilia and acting as a barrier that prevents diffusion of transmembrane proteins between the cilia and plasma membranes. The sequence is that of B9 domain-containing protein 2 (B9d2) from Rattus norvegicus (Rat).